A 639-amino-acid chain; its full sequence is Probable methyltransferase PMT18 (639 aa).

Over Met-1–Thr-19 the chain is Cytoplasmic. Residues Trp-20–Val-42 traverse the membrane as a helical; Signal-anchor for type II membrane protein segment. The disordered stretch occupies residues Thr-41 to Glu-86. At Pro-43–Ser-639 the chain is on the lumenal side. Low complexity predominate over residues Thr-58–Ser-85. 2 N-linked (GlcNAc...) asparagine glycosylation sites follow: Asn-104 and Asn-427.

It belongs to the methyltransferase superfamily.

It localises to the endoplasmic reticulum membrane. In Arabidopsis thaliana (Mouse-ear cress), this protein is Probable methyltransferase PMT18.